The chain runs to 392 residues: Outer membrane protein assembly factor BamB (392 aa).

A signal peptide spans 1–19 (MQLRKLLLPGLLSVTLLSG). Residue Cys-20 is the site of N-palmitoyl cysteine attachment. The S-diacylglycerol cysteine moiety is linked to residue Cys-20.

This sequence belongs to the BamB family. As to quaternary structure, part of the Bam complex, which is composed of the outer membrane protein BamA, and four lipoproteins BamB, BamC, BamD and BamE.

The protein localises to the cell outer membrane. In terms of biological role, part of the outer membrane protein assembly complex, which is involved in assembly and insertion of beta-barrel proteins into the outer membrane. In Shigella dysenteriae serotype 1 (strain Sd197), this protein is Outer membrane protein assembly factor BamB.